Consider the following 38-residue polypeptide: Turripeptide GpIAa (38 aa).

This sequence belongs to the turripeptide family. As to expression, expressed by the venom duct.

It localises to the secreted. This is Turripeptide GpIAa from Cryptogemma periscelida (Atlantic gem-turris).